We begin with the raw amino-acid sequence, 537 residues long: ATPase expression protein 2, mitochondrial (537 aa).

It belongs to the AEP2 family. In terms of assembly, binds to the 5'UTR of the OLI1 mRNA.

The protein resides in the mitochondrion. In terms of biological role, required for translation of the mitochondrial OLI1 transcript coding for the mitochondrial ATP synthase subunit 9. This chain is ATPase expression protein 2, mitochondrial (AEP2), found in Eremothecium gossypii (strain ATCC 10895 / CBS 109.51 / FGSC 9923 / NRRL Y-1056) (Yeast).